A 178-amino-acid polypeptide reads, in one-letter code: Translation initiation factor IF-3 (178 aa).

The segment at 1–20 (MRRPFRATPVQKDGPRSNRD) is disordered.

It belongs to the IF-3 family. In terms of assembly, monomer.

Its subcellular location is the cytoplasm. Functionally, IF-3 binds to the 30S ribosomal subunit and shifts the equilibrium between 70S ribosomes and their 50S and 30S subunits in favor of the free subunits, thus enhancing the availability of 30S subunits on which protein synthesis initiation begins. In Brucella abortus biovar 1 (strain 9-941), this protein is Translation initiation factor IF-3.